A 533-amino-acid polypeptide reads, in one-letter code: Putative amidase C550.07 (533 aa).

Residues Lys-132 and Ser-207 each act as charge relay system in the active site. Ser-231 serves as the catalytic Acyl-ester intermediate.

Belongs to the amidase family.

It localises to the cytoplasm. Its subcellular location is the nucleus. The enzyme catalyses a monocarboxylic acid amide + H2O = a monocarboxylate + NH4(+). The protein is Putative amidase C550.07 of Schizosaccharomyces pombe (strain 972 / ATCC 24843) (Fission yeast).